Consider the following 312-residue polypeptide: tRNA dimethylallyltransferase (312 aa).

11-18 contacts ATP; sequence GPTAAGKS. A substrate-binding site is contributed by 13 to 18; sequence TAAGKS. 3 interaction with substrate tRNA regions span residues 36-39, 160-164, and 243-248; these read DSAT, QRIQR, and RCVGYR.

The protein belongs to the IPP transferase family. Monomer. Requires Mg(2+) as cofactor.

The enzyme catalyses adenosine(37) in tRNA + dimethylallyl diphosphate = N(6)-dimethylallyladenosine(37) in tRNA + diphosphate. Catalyzes the transfer of a dimethylallyl group onto the adenine at position 37 in tRNAs that read codons beginning with uridine, leading to the formation of N6-(dimethylallyl)adenosine (i(6)A). The chain is tRNA dimethylallyltransferase from Bordetella avium (strain 197N).